The following is a 167-amino-acid chain: Photosystem II extrinsic protein V (167 aa).

Positions 1–30 (MVFKTLRRTLWLTLAALLAVFQFNLGAAQA) are cleaved as a signal peptide. C67, C70, H71, and H122 together coordinate heme c.

It belongs to the cytochrome c family. PsbV subfamily. In terms of assembly, PSII is composed of 1 copy each of membrane proteins PsbA, PsbB, PsbC, PsbD, PsbE, PsbF, PsbH, PsbI, PsbJ, PsbK, PsbL, PsbM, PsbT, PsbX, PsbY, PsbZ, Psb30/Ycf12, peripheral proteins PsbO, CyanoQ (PsbQ), PsbU, PsbV and a large number of cofactors. It forms dimeric complexes. Requires heme c as cofactor.

The protein localises to the cellular thylakoid membrane. Its function is as follows. One of the extrinsic, lumenal subunits of photosystem II (PSII). PSII is a light-driven water plastoquinone oxidoreductase, using light energy to abstract electrons from H(2)O, generating a proton gradient subsequently used for ATP formation. The extrinsic proteins stabilize the structure of photosystem II oxygen-evolving complex (OEC), the ion environment of oxygen evolution and protect the OEC against heat-induced inactivation. Low-potential cytochrome c that plays a role in the OEC of PSII. This chain is Photosystem II extrinsic protein V, found in Synechococcus elongatus (strain ATCC 33912 / PCC 7942 / FACHB-805) (Anacystis nidulans R2).